An 84-amino-acid polypeptide reads, in one-letter code: Putative membrane protein insertion efficiency factor (84 aa).

It belongs to the UPF0161 family.

It is found in the cell inner membrane. In terms of biological role, could be involved in insertion of integral membrane proteins into the membrane. This Shewanella frigidimarina (strain NCIMB 400) protein is Putative membrane protein insertion efficiency factor.